The chain runs to 1226 residues: Probable phosphorylase b kinase regulatory subunit alpha (1226 aa).

Positions 666–688 (NEKITTPRGPRTLRRGESVKDRS) are disordered. The segment covering 679 to 688 (RRGESVKDRS) has biased composition (basic and acidic residues).

It belongs to the phosphorylase b kinase regulatory chain family.

The protein operates within glycan biosynthesis; glycogen metabolism. Functionally, phosphorylase b kinase catalyzes the phosphorylation of serine in certain substrates, including troponin I. The alpha chain may bind calmodulin. This is Probable phosphorylase b kinase regulatory subunit alpha from Caenorhabditis elegans.